The chain runs to 208 residues: Glutathione S-transferase (208 aa).

The region spanning 1 to 78 (MSYKLTYFPI…HLARKFNLNG (78 aa)) is the GST N-terminal domain. Glutathione contacts are provided by residues Tyr-7, Lys-42, 49–50 (QL), and 62–63 (QS). One can recognise a GST C-terminal domain in the interval 80-200 (NNAETSYVDM…YCAKRNASKM (121 aa)).

The protein belongs to the GST superfamily. Pi family. As to quaternary structure, homodimer.

The catalysed reaction is RX + glutathione = an S-substituted glutathione + a halide anion + H(+). Its function is as follows. Conjugation of reduced glutathione to a wide number of exogenous and endogenous hydrophobic electrophiles. The protein is Glutathione S-transferase of Dirofilaria immitis (Canine heartworm).